A 116-amino-acid polypeptide reads, in one-letter code: Protein aq_1857 (116 aa).

Belongs to the HesB/IscA family.

This chain is Protein aq_1857, found in Aquifex aeolicus (strain VF5).